The following is a 446-amino-acid chain: Dual specificity mitogen-activated protein kinase kinase 2 (446 aa).

A compositionally biased stretch (low complexity) spans 27–42; it reads SSGSSAGLGFQGQSQQ. A disordered region spans residues 27–51; the sequence is SSGSSAGLGFQGQSQQHSTVNSMQG. The Protein kinase domain maps to 149–414; it reads LKDLGEIGRG…YKELLKHPFI (266 aa). Residues 155–163 and lysine 178 contribute to the ATP site; that span reads IGRGAYGSV. The active-site Proton acceptor is the aspartate 276. Serine 304 carries the phosphoserine; by RAF modification. Threonine 308 is modified (phosphothreonine; by RAF).

This sequence belongs to the protein kinase superfamily. STE Ser/Thr protein kinase family. MAP kinase kinase subfamily. In terms of processing, MAPKK is itself dependent on Ser/Thr phosphorylation for activity catalyzed by MAP kinase kinase kinases. Expressed abundantly in the adult brain and muscle.

The catalysed reaction is L-seryl-[protein] + ATP = O-phospho-L-seryl-[protein] + ADP + H(+). It carries out the reaction L-threonyl-[protein] + ATP = O-phospho-L-threonyl-[protein] + ADP + H(+). It catalyses the reaction L-tyrosyl-[protein] + ATP = O-phospho-L-tyrosyl-[protein] + ADP + H(+). Its function is as follows. Catalyzes the concomitant phosphorylation of a threonine and a tyrosine residue in a Thr-Glu-Tyr sequence located in MAP kinases. In Xenopus laevis (African clawed frog), this protein is Dual specificity mitogen-activated protein kinase kinase 2 (map2k2).